A 511-amino-acid polypeptide reads, in one-letter code: Probable G-protein coupled receptor 101 (511 aa).

The Extracellular segment spans residues 1–35; the sequence is MPPSCTNSTQENNGSRVCLPLSKMPISVAHGIIRS. N-linked (GlcNAc...) asparagine glycans are attached at residues Asn-7 and Asn-13. A helical membrane pass occupies residues 36 to 56; the sequence is VVLLVILGVAFLGNVVLGYVL. Residues 57-67 lie on the Cytoplasmic side of the membrane; the sequence is HRKPNLLQVTN. A helical transmembrane segment spans residues 68–90; it reads RFIFNLLVTDLLQVALVAPWVVS. The Extracellular segment spans residues 91 to 106; sequence TAIPFFWPLNIHFCTA. Cys-104 and Cys-182 form a disulfide bridge. The chain crosses the membrane as a helical span at residues 107–127; sequence LVSLTHLFAFASVNTIVVVSV. The Cytoplasmic portion of the chain corresponds to 128–149; that stretch reads DRYLTIIHPLSYPSKMTNRRSY. A helical transmembrane segment spans residues 150-170; it reads ILLYGTWIAAFLQSTPPLYGW. The Extracellular segment spans residues 171–196; it reads GHATFDDRNAFCSMIWGASPAYTVVS. The chain crosses the membrane as a helical span at residues 197-217; the sequence is VVSFLVIPLGVMIACYSVVFG. Residues 218–398 lie on the Cytoplasmic side of the membrane; sequence AARRQQALLY…PPCYECKAAR (181 aa). Residues 240–261 show a composition bias toward basic and acidic residues; that stretch reads DSVVHENEEGAKKRDEFQDKNE. 2 disordered regions span residues 240-315 and 367-386; these read DSVV…EVSN and EAMR…TSDP. A compositionally biased stretch (polar residues) spans 376–385; it reads PPSRRNSTSD. The helical transmembrane segment at 399 to 419 threads the bilayer; the sequence is VIFVIISTYVLSLGPYCFLAV. At 420-432 the chain is on the extracellular side; sequence LAVWVDIDTRVPQ. The chain crosses the membrane as a helical span at residues 433–453; it reads WVITIIIWLFFLQCCIHPYVY. At 454-511 the chain is on the cytoplasmic side; the sequence is GYMHKSIKKEIQEVLKKLICKKSPPVEDSHPDLHETEAGTEGGIEGKAVPSHDSATSP. Residues 476-511 form a disordered region; it reads SPPVEDSHPDLHETEAGTEGGIEGKAVPSHDSATSP. Basic and acidic residues predominate over residues 477 to 490; sequence PPVEDSHPDLHETE.

The protein belongs to the G-protein coupled receptor 1 family. Expressed in the brain in hypothalamus.

It is found in the cell membrane. Functionally, orphan receptor. The chain is Probable G-protein coupled receptor 101 (Gpr101) from Mus musculus (Mouse).